The sequence spans 311 residues: Retinol dehydrogenase 8 (311 aa).

An NADP(+)-binding site is contributed by 9–18 (LISGCSSGIG). 3 helical membrane passes run 86–106 (VLVN…SLAA), 137–157 (IVVI…VYAA), and 169–189 (LAIQ…GPVV). Serine 142 serves as a coordination point for substrate. The active-site Proton acceptor is the tyrosine 155.

The protein belongs to the short-chain dehydrogenases/reductases (SDR) family. Detected in photoreceptor outer segments in the retina (at protein level).

Its subcellular location is the membrane. The enzyme catalyses all-trans-retinol + NADP(+) = all-trans-retinal + NADPH + H(+). Its function is as follows. Retinol dehydrogenase with a clear preference for NADP. Converts all-trans-retinal to all-trans-retinol. May play a role in the regeneration of visual pigment at high light intensity. This is Retinol dehydrogenase 8 (RDH8) from Homo sapiens (Human).